Consider the following 235-residue polypeptide: Probable transcriptional regulatory protein Ccon26_04940 (235 aa).

Belongs to the TACO1 family.

It is found in the cytoplasm. In Campylobacter concisus (strain 13826), this protein is Probable transcriptional regulatory protein Ccon26_04940.